The following is a 394-amino-acid chain: Probable peptidoglycan glycosyltransferase FtsW (394 aa).

The Cytoplasmic segment spans residues 1–26 (MNTMRPRHLNQRGKPVSRPISLYDKW). A helical transmembrane segment spans residues 27-47 (LIGAVFGLLIIGLMMVASSSV). Over 48–57 (MISTKYFHQP) the chain is Periplasmic. A helical transmembrane segment spans residues 58–78 (FHFLIRQACYLFVGLLLALIV). Over 79–88 (VRTDSSFWEK) the chain is Cytoplasmic. A helical transmembrane segment spans residues 89-109 (ISMPMMIGCVFLLLIVLIPGI). The Periplasmic portion of the chain corresponds to 110 to 118 (GKSVNGSRR). Residues 119 to 139 (WLALGPIGVQVSELTKLAMIF) traverse the membrane as a helical segment. Topologically, residues 140–154 (YLSGYLVRQQEAVCE) are cytoplasmic. The helical transmembrane segment at 155–175 (SIFGFIKPMAILAVVSVLLLL) threads the bilayer. At 176-177 (EP) the chain is on the periplasmic side. Residues 178–198 (DFGATVVISGTVMAMLFLAGV) traverse the membrane as a helical segment. At 199–201 (KLR) the chain is on the cytoplasmic side. A helical membrane pass occupies residues 202-222 (YYFGLMLVVVTALALLAVSSP). Residues 223–278 (YRVARLTAFLDPWADQYNSGYQLTQSLIAFGRGGWFGTGLGESIQKLLYLPEAHTD) lie on the Periplasmic side of the membrane. The chain crosses the membrane as a helical span at residues 279–299 (FLFAVIAEELGLFGILVVITL). Residues 300–327 (YSILVIRGLNIGYTAYTQERHFASYTAY) lie on the Cytoplasmic side of the membrane. Residues 328 to 348 (GLTIWLALQASINMGVNAGLL) form a helical membrane-spanning segment. Topologically, residues 349-354 (PTKGLT) are periplasmic. A helical membrane pass occupies residues 355–375 (LPLLSYGGASMVINCIVIALL). Over 376–394 (LRIDHENRWQSLGLRPLTA) the chain is Cytoplasmic.

It belongs to the SEDS family. FtsW subfamily.

It localises to the cell inner membrane. It carries out the reaction [GlcNAc-(1-&gt;4)-Mur2Ac(oyl-L-Ala-gamma-D-Glu-L-Lys-D-Ala-D-Ala)](n)-di-trans,octa-cis-undecaprenyl diphosphate + beta-D-GlcNAc-(1-&gt;4)-Mur2Ac(oyl-L-Ala-gamma-D-Glu-L-Lys-D-Ala-D-Ala)-di-trans,octa-cis-undecaprenyl diphosphate = [GlcNAc-(1-&gt;4)-Mur2Ac(oyl-L-Ala-gamma-D-Glu-L-Lys-D-Ala-D-Ala)](n+1)-di-trans,octa-cis-undecaprenyl diphosphate + di-trans,octa-cis-undecaprenyl diphosphate + H(+). The protein operates within cell wall biogenesis; peptidoglycan biosynthesis. Functionally, peptidoglycan polymerase that is essential for cell division. In Legionella pneumophila subsp. pneumophila (strain Philadelphia 1 / ATCC 33152 / DSM 7513), this protein is Probable peptidoglycan glycosyltransferase FtsW.